The sequence spans 847 residues: Acyl-homoserine lactone acylase QuiP (847 aa).

The N-terminal stretch at 1-26 is a signal peptide; sequence MASPAFMRFLPRCGAAAAFGTLLGLA. S265 acts as the Nucleophile in catalysis.

This sequence belongs to the peptidase S45 family. In terms of assembly, heterodimer of an alpha subunit and a beta subunit processed from the same precursor.

It is found in the periplasm. It carries out the reaction an N-acyl-L-homoserine lactone + H2O = L-homoserine lactone + a carboxylate. Its function is as follows. Catalyzes the deacylation of acyl-homoserine lactone (AHL or acyl-HSL), releasing homoserine lactone (HSL) and the corresponding fatty acid. Possesses a specificity for the degradation of long-chain acyl-HSLs (side chains of seven or more carbons in length). Appears to be the acyl-HSL acylase that underlies the ability of P.aeruginosa to degrade and utilize certain acyl-HSLs as growth nutrients, including one of its own quorum signals, 3-oxo-C12-HSL. Is thought to have a role in quorum quenching. In Pseudomonas aeruginosa (strain ATCC 15692 / DSM 22644 / CIP 104116 / JCM 14847 / LMG 12228 / 1C / PRS 101 / PAO1), this protein is Acyl-homoserine lactone acylase QuiP (quiP).